Here is a 366-residue protein sequence, read N- to C-terminus: Dehydrogenase aclE (366 aa).

Positions 1–19 (MSKRIRLGIVGLSADPSHC) are cleaved as a signal peptide. N-linked (GlcNAc...) asparagine glycosylation is present at Asn330.

The protein belongs to the Gfo/Idh/MocA family.

It participates in mycotoxin biosynthesis. In terms of biological role, dehydrogenase; part of the gene cluster that mediates the biosynthesis of aspirochlorine (or antibiotic A30641), an unusual halogenated spiro compound with distinctive antifungal properties due to selective inhibition of protein biosynthesis, and which is also active against bacteria, viruses, and murine tumor cells. The non-ribosomal peptide synthetase (NRPS) aclP is responsible the formation of the diketopiperazine (DKP) core from the condensation of 2 phenylalanine residues. One Phe residue is tailored into chlorotyrosine by hydroxylation and chlorination, whereas the second Phe undergoes an unprecedented C-C bond cleavage to be converted into glycine. After formation of the DKP, sulfur is incorporated into the DKP by conjugation with glutathione by aclG, followed by its stepwise degradation to the thiol by aclI, aclJ and aclK, and the dithiol oxidation by aclT. In addition, oxygenases (aclB, aclC, aclL and aclO) and O-methyltransferases (aclM and aclU) act as tailoring enzymes to produce the intermediate dechloroaspirochlorine. Ultimately, chlorination of dechloroaspirochlorine by the halogenase aclH is the last step in the aspirochlorine pathway. The protein is Dehydrogenase aclE of Aspergillus oryzae (strain ATCC 42149 / RIB 40) (Yellow koji mold).